A 211-amino-acid polypeptide reads, in one-letter code: FMN-dependent NADH:quinone oxidoreductase (211 aa).

FMN contacts are provided by residues 17 to 19 (SYS) and 99 to 102 (MWNF).

Belongs to the azoreductase type 1 family. Homodimer. Requires FMN as cofactor.

It carries out the reaction 2 a quinone + NADH + H(+) = 2 a 1,4-benzosemiquinone + NAD(+). The catalysed reaction is N,N-dimethyl-1,4-phenylenediamine + anthranilate + 2 NAD(+) = 2-(4-dimethylaminophenyl)diazenylbenzoate + 2 NADH + 2 H(+). Quinone reductase that provides resistance to thiol-specific stress caused by electrophilic quinones. Functionally, also exhibits azoreductase activity. Catalyzes the reductive cleavage of the azo bond in aromatic azo compounds to the corresponding amines. The protein is FMN-dependent NADH:quinone oxidoreductase of Exiguobacterium sp. (strain ATCC BAA-1283 / AT1b).